We begin with the raw amino-acid sequence, 693 residues long: Heat shock protein homolog SSE1 (693 aa).

The segment at 665–693 (LAEKLAAQRKAESEKKESKADAEGDVELD) is disordered. Positions 673 to 686 (RKAESEKKESKADA) are enriched in basic and acidic residues.

Belongs to the heat shock protein 70 family.

Its subcellular location is the cytoplasm. This chain is Heat shock protein homolog SSE1 (SSE1), found in Lachancea kluyveri (strain ATCC 58438 / CBS 3082 / BCRC 21498 / NBRC 1685 / JCM 7257 / NCYC 543 / NRRL Y-12651) (Yeast).